The sequence spans 308 residues: tRNA pseudouridine synthase B (308 aa).

Catalysis depends on Asp-46, which acts as the Nucleophile.

Belongs to the pseudouridine synthase TruB family. Type 1 subfamily.

The enzyme catalyses uridine(55) in tRNA = pseudouridine(55) in tRNA. Functionally, responsible for synthesis of pseudouridine from uracil-55 in the psi GC loop of transfer RNAs. The polypeptide is tRNA pseudouridine synthase B (Marinomonas sp. (strain MWYL1)).